We begin with the raw amino-acid sequence, 131 residues long: C-type natriuretic peptide (131 aa).

The N-terminal stretch at 1-20 is a signal peptide; sequence MMCKALVFAVLLLAVPLERA. The propeptide occupies 21-109; the sequence is DSRALRTPVD…KRALPDRAKR (89 aa). Cys115 and Cys131 are oxidised to a cystine.

Belongs to the natriuretic peptide family. Highly expressed in brain and liver, and moderately in gut, gills and heart. Expressed to a low level in atrium, ventricle and liver of fresh water eels.

The protein resides in the secreted. Hormone which plays a role in endochondral ossification through regulation of cartilaginous growth plate chondrocytes proliferation and differentiation. May also be vasoactive and natriuretic. May be important for freshwater adaptation. This chain is C-type natriuretic peptide (cnp), found in Anguilla japonica (Japanese eel).